We begin with the raw amino-acid sequence, 230 residues long: UPF0702 transmembrane protein YcaP (230 aa).

3 helical membrane-spanning segments follow: residues 16–36 (FDFL…VFLF), 48–68 (MSLF…DVAF), and 75–95 (VPVL…MWLM).

It belongs to the UPF0702 family.

The protein localises to the cell membrane. The protein is UPF0702 transmembrane protein YcaP (ycaP) of Escherichia coli (strain K12).